The primary structure comprises 137 residues: Probable S-adenosyl-L-methionine-binding protein MTH_1797 (137 aa).

The 130-residue stretch at 8–137 (IRPVGVVRSP…YYEDIDSLGF (130 aa)) folds into the TsaA-like domain. S-adenosyl-L-methionine is bound by residues 25–27 (PAQ), 63–64 (HL), Arg-87, Leu-97, and 117–120 (LDGS).

This sequence belongs to the tRNA methyltransferase O family.

The protein is Probable S-adenosyl-L-methionine-binding protein MTH_1797 of Methanothermobacter thermautotrophicus (strain ATCC 29096 / DSM 1053 / JCM 10044 / NBRC 100330 / Delta H) (Methanobacterium thermoautotrophicum).